Reading from the N-terminus, the 146-residue chain is Cystatin-C (146 aa).

Residues 1 to 26 (MAGPLRAPLLLLAILAVALALSPAAG) form the signal peptide. Phosphoserine is present on S43. The Secondary area of contact signature appears at 81-85 (QIVAG). Disulfide bonds link C99–C109 and C123–C143.

The protein belongs to the cystatin family.

Its subcellular location is the secreted. In terms of biological role, as an inhibitor of cysteine proteinases, this protein is thought to serve an important physiological role as a local regulator of this enzyme activity. The polypeptide is Cystatin-C (CST3) (Saimiri sciureus (Common squirrel monkey)).